The following is a 104-amino-acid chain: U20-lycotoxin-Ls1c (104 aa).

A signal peptide spans 1–30; it reads MFSTSDQVSKMNSRILSALLILGIATCVIA. In terms of domain architecture, WAP spans 31–76; the sequence is GGFCPKSRHPQCDLSYKINDCCAQSDCRVGSVCCVEGCGNVCRAES. Disulfide bonds link C34/C64, C42/C68, C51/C63, C52/C90, and C57/C72.

The protein belongs to the venom protein 11 family. 02 (wap-2) subfamily. Post-translationally, contains 5 disulfide bonds. Expressed by the venom gland.

It localises to the secreted. Has antibacterial activity. This Lycosa singoriensis (Wolf spider) protein is U20-lycotoxin-Ls1c.